Reading from the N-terminus, the 798-residue chain is ATP-dependent RecD2 DNA helicase (798 aa).

An ATP-binding site is contributed by 370 to 374 (GTGKT).

This sequence belongs to the RecD family. RecD2 subfamily. As to quaternary structure, interacts with SSB (sbbA).

The protein resides in the cytoplasm. Its subcellular location is the nucleoid. The enzyme catalyses Couples ATP hydrolysis with the unwinding of duplex DNA at the replication fork by translocating in the 5'-3' direction. This creates two antiparallel DNA single strands (ssDNA). The leading ssDNA polymer is the template for DNA polymerase III holoenzyme which synthesizes a continuous strand.. The catalysed reaction is ATP + H2O = ADP + phosphate + H(+). In terms of biological role, in vivo may favor replication restart by preventing RecA from binding to blocked replication forks, avoiding unnecessary recombination during replication restart. Acts as a negative modulator of the RecA-ssDNA filament, may dissasemble RecA threads, can act as both a positive and negative regulator of strand exchange. Probably stabilizes or aids normal replication fork progression, is important for survival after treatment with DNA-damaging agents that can result in replication fork stress. Overcomes the inhibition of replication restart by RecA/RecO, probably by displacing RecA. Increasing levels inhibit PriA-dependent DNA replication initiation (but have little effect on ongoing replication) in vitro; may act by disturbing SsbA assembly. Probably has a role in recombinational DNA repair. Does not seem to contribute to mismatch repair. Has 5'-3' helicase activity that is probably ATP-dependent. This chain is ATP-dependent RecD2 DNA helicase, found in Bacillus subtilis (strain 168).